Here is a 524-residue protein sequence, read N- to C-terminus: Lysine--tRNA ligase (524 aa).

Mg(2+) contacts are provided by E431 and E438.

It belongs to the class-II aminoacyl-tRNA synthetase family. Homodimer. Requires Mg(2+) as cofactor.

The protein resides in the cytoplasm. The catalysed reaction is tRNA(Lys) + L-lysine + ATP = L-lysyl-tRNA(Lys) + AMP + diphosphate. This Chlamydia muridarum (strain MoPn / Nigg) protein is Lysine--tRNA ligase (lysS).